Consider the following 260-residue polypeptide: Ribosomal RNA small subunit methyltransferase J (260 aa).

Residues 125 to 126 and aspartate 179 contribute to the S-adenosyl-L-methionine site; that span reads ER.

This sequence belongs to the methyltransferase superfamily. RsmJ family.

The protein localises to the cytoplasm. The enzyme catalyses guanosine(1516) in 16S rRNA + S-adenosyl-L-methionine = N(2)-methylguanosine(1516) in 16S rRNA + S-adenosyl-L-homocysteine + H(+). In terms of biological role, specifically methylates the guanosine in position 1516 of 16S rRNA. The polypeptide is Ribosomal RNA small subunit methyltransferase J (Pseudomonas entomophila (strain L48)).